An 80-amino-acid polypeptide reads, in one-letter code: Exodeoxyribonuclease 7 small subunit (80 aa).

This sequence belongs to the XseB family. As to quaternary structure, heterooligomer composed of large and small subunits.

It is found in the cytoplasm. It catalyses the reaction Exonucleolytic cleavage in either 5'- to 3'- or 3'- to 5'-direction to yield nucleoside 5'-phosphates.. Functionally, bidirectionally degrades single-stranded DNA into large acid-insoluble oligonucleotides, which are then degraded further into small acid-soluble oligonucleotides. The protein is Exodeoxyribonuclease 7 small subunit of Citrobacter koseri (strain ATCC BAA-895 / CDC 4225-83 / SGSC4696).